The following is a 431-amino-acid chain: O-phosphoseryl-tRNA(Sec) selenium transferase (431 aa).

The tetramerization stretch occupies residues 1–36 (MRGLIPDHMLERGRTVLDSYREPVERLLSERRMPEE). Position 67 (R67) interacts with pyridoxal 5'-phosphate. The phosphate loop (P-loop) stretch occupies residues 88-98 (GRSGTLVDPQP). The substrate site is built by R89, S90, and Q97. Residue K269 is modified to N6-(pyridoxal phosphate)lysine. Substrate is bound at residue R298.

The protein belongs to the SepSecS family. In terms of assembly, homotetramer. It depends on pyridoxal 5'-phosphate as a cofactor.

It catalyses the reaction O-phospho-L-seryl-tRNA(Sec) + selenophosphate + H2O = L-selenocysteinyl-tRNA(Sec) + 2 phosphate. It participates in aminoacyl-tRNA biosynthesis; selenocysteinyl-tRNA(Sec) biosynthesis; selenocysteinyl-tRNA(Sec) from L-seryl-tRNA(Sec) (archaeal/eukaryal route): step 2/2. Converts O-phosphoseryl-tRNA(Sec) to selenocysteinyl-tRNA(Sec) required for selenoprotein biosynthesis. The protein is O-phosphoseryl-tRNA(Sec) selenium transferase (spcS) of Methanopyrus kandleri (strain AV19 / DSM 6324 / JCM 9639 / NBRC 100938).